We begin with the raw amino-acid sequence, 919 residues long: MDYKDTLLLPATDFPMRGDLPKNEPIRLKSWYEERKIYEKMKSKRAGAAKNFAIHDGPPYANGHLHIGHALNKILKDIITKTHYFFGENVRYVPGWDCHGLPIEQQVEVKLGDKKKELSKTQIRELCRAHAREFIDIQREEFKALGIIGDFENPYMTMKFEFEADIYRSLCEIAKKGLLIERSKPVYWSWAAKSALAEAEVEYEDKEDYSIYVAFELDSDALAKLGVKLAKAVIWTTTPWTLPANQAISLKPDEIYVLTSENLIFAKPLLESLVNLGLTKGEILKEFVSNELENTHAINPLNDRKSRFLLGDHVLMDGGTGLVHTAPGHGEDDYYICLRYGFKEILMPVDDGGLYDETLKAHSLLRADVVDSFVGMHIFKANEKIIELLGENLLHVSKFTHSYPFCWRTHKPVIYRATKQWFIAMDEPKLGGKTLREVARGELENVKFYPSVGIKRIGSMIENRPDWCISRQRDWGVPIAFFRRKDTKEPIFEPKILEHIAKIFEQKGADAWWDMSVEELLAPDSGFEAKNLEKVMDILDVWFDSGSTWHAVLNSKNYDAGSYPADMYLEGSDQHRGWFQSSLLVSTAINSHAPYKNILTHGFTVDENGQKMSKSKGNVVAPQDVAKSYGVEILRLWVGLSDYSSDLKISENILKQVSEQYRKIRNTIRFLLANVNDLETIGTDFGFLDQWILGRAKRVFDEASKCFRAYDFSKGFNLLLNFLSADLSGIYLDICKDRLYCDAKDSPRRRSAQSAMAIITKSLLPLIAPTLTYTVDEVMDYAPAIIKGDAKDAFDLVYEPINFDFDVEDELLFASREKFFELIDALKKDKKIKSTLELVLETTSSKILDYDSVERADIYMVSDVHRYSGNEGLGEFEIDGEKFKIVLSDASKCPRCWKFNAIIDGSTCERCSEVLNSVC.

The short motif at 59–69 (PYANGHLHIGH) is the 'HIGH' region element. Glu-570 serves as a coordination point for L-isoleucyl-5'-AMP. The 'KMSKS' region motif lies at 611-615 (KMSKS). Lys-614 lines the ATP pocket. Cys-893, Cys-896, Cys-908, and Cys-911 together coordinate Zn(2+).

It belongs to the class-I aminoacyl-tRNA synthetase family. IleS type 1 subfamily. As to quaternary structure, monomer. The cofactor is Zn(2+).

The protein localises to the cytoplasm. It carries out the reaction tRNA(Ile) + L-isoleucine + ATP = L-isoleucyl-tRNA(Ile) + AMP + diphosphate. Functionally, catalyzes the attachment of isoleucine to tRNA(Ile). As IleRS can inadvertently accommodate and process structurally similar amino acids such as valine, to avoid such errors it has two additional distinct tRNA(Ile)-dependent editing activities. One activity is designated as 'pretransfer' editing and involves the hydrolysis of activated Val-AMP. The other activity is designated 'posttransfer' editing and involves deacylation of mischarged Val-tRNA(Ile). This is Isoleucine--tRNA ligase from Campylobacter curvus (strain 525.92).